The following is a 1427-amino-acid chain: DNA-directed RNA polymerase subunit beta' (1427 aa).

Zn(2+) is bound by residues Cys66, Cys68, Cys81, and Cys84. Asp472, Asp474, and Asp476 together coordinate Mg(2+). 4 residues coordinate Zn(2+): Cys815, Cys889, Cys896, and Cys899.

It belongs to the RNA polymerase beta' chain family. The RNAP catalytic core consists of 2 alpha, 1 beta, 1 beta' and 1 omega subunit. When a sigma factor is associated with the core the holoenzyme is formed, which can initiate transcription. It depends on Mg(2+) as a cofactor. Requires Zn(2+) as cofactor.

It carries out the reaction RNA(n) + a ribonucleoside 5'-triphosphate = RNA(n+1) + diphosphate. Functionally, DNA-dependent RNA polymerase catalyzes the transcription of DNA into RNA using the four ribonucleoside triphosphates as substrates. In Bacteroides fragilis (strain ATCC 25285 / DSM 2151 / CCUG 4856 / JCM 11019 / LMG 10263 / NCTC 9343 / Onslow / VPI 2553 / EN-2), this protein is DNA-directed RNA polymerase subunit beta'.